Here is a 115-residue protein sequence, read N- to C-terminus: Ig heavy chain V-III region W3082 (115 aa).

The 114-residue stretch at 1-114 (EVKLEESGGG…WGQGTLVTVS (114 aa)) folds into the Ig-like domain. Residues Cys22 and Cys98 are joined by a disulfide bond.

The protein is Ig heavy chain V-III region W3082 of Mus musculus (Mouse).